The following is a 587-amino-acid chain: Hatching enzyme (587 aa).

The first 18 residues, M1–T18, serve as a signal peptide directing secretion. Positions V19–P166 are cleaved as a propeptide — activation peptide. N-linked (GlcNAc...) asparagine glycans are attached at residues N64, N126, and N141. Positions P157–V164 match the Cysteine switch motif. The Zn(2+) site is built by C159 and H283. Residue E284 is part of the active site. Residues H287 and H293 each coordinate Zn(2+). Residues L325–G382 are disordered. A compositionally biased stretch (low complexity) spans T334–S371. C380 and C582 are joined by a disulfide. Hemopexin repeat units lie at residues S381–F422, P425–L468, P469–V513, and H518–C570. N584 carries N-linked (GlcNAc...) asparagine glycosylation.

It belongs to the peptidase M10A family. Zn(2+) serves as cofactor.

The enzyme catalyses Hydrolysis of proteins of the fertilization envelope and dimethylcasein.. Its function is as follows. Allows the sea urchin to digest the protective envelope derived from the egg extracellular matrix; thus allowing the sea urchin to swim freely. The chain is Hatching enzyme from Paracentrotus lividus (Common sea urchin).